We begin with the raw amino-acid sequence, 347 residues long: Fused nickel transport protein NikMN (347 aa).

The next 9 membrane-spanning stretches (helical) occupy residues 6 to 26 (GYLS…FWYV), 40 to 60 (LPLV…NLPI), 73 to 93 (IAAV…ALLI), 96 to 116 (IFFG…MAVV), 140 to 160 (VIMA…LAAV), 185 to 205 (VAVP…EFIV), 236 to 256 (LWAG…AAGT), 273 to 293 (AAMA…GGFA), and 319 to 339 (VLSA…SAGL).

The protein belongs to the CbiM family. NikM subfamily. In terms of assembly, forms an energy-coupling factor (ECF) transporter complex composed of an ATP-binding protein (A component, NikO), a transmembrane protein (T component, NikQ) and a fused possible substrate-capture protein (S component, NikMN) of unknown stoichimetry.

The protein localises to the cell inner membrane. In terms of biological role, part of the energy-coupling factor (ECF) transporter complex NikMNQO involved in nickel import. The complex confers nickel uptake upon expression in E.coli; can also transport cobalt with a very low affinity. The chain is Fused nickel transport protein NikMN (nikMN) from Rhodobacter capsulatus (strain ATCC BAA-309 / NBRC 16581 / SB1003).